The following is a 180-amino-acid chain: Putative adenylate kinase (180 aa).

Residues Gly-10, Gly-12, Lys-13, Thr-14, and Thr-15 each contribute to the ATP site. Residues 30-50 are NMP; the sequence is NLRDFALEKGIGEVKGDELEV. The tract at residues 99–109 is LID; the sequence is ERGYSKDKIGE. Residues Arg-100 and Lys-138 each coordinate ATP.

It belongs to the adenylate kinase family. AK6 subfamily. As to quaternary structure, interacts with uS11. Not a structural component of 40S pre-ribosomes, but transiently interacts with them by binding to uS11.

It carries out the reaction AMP + ATP = 2 ADP. It catalyses the reaction ATP + H2O = ADP + phosphate + H(+). Its function is as follows. Broad-specificity nucleoside monophosphate (NMP) kinase that catalyzes the reversible transfer of the terminal phosphate group between nucleoside triphosphates and monophosphates. Also has ATPase activity. Involved in the late maturation steps of the 30S ribosomal particles, specifically 16S rRNA maturation. While NMP activity is not required for ribosome maturation, ATPase activity is. Associates transiently with small ribosomal subunit protein uS11. ATP hydrolysis breaks the interaction with uS11. May temporarily remove uS11 from the ribosome to enable a conformational change of the ribosomal RNA that is needed for the final maturation step of the small ribosomal subunit. This is Putative adenylate kinase from Pyrococcus furiosus (strain ATCC 43587 / DSM 3638 / JCM 8422 / Vc1).